Consider the following 61-residue polypeptide: Arabinogalactan protein 15 (61 aa).

Residues 1-22 (MAISKASIVVLMMVIISVVASA) form the signal peptide. At glutamine 23 the chain carries Pyrrolidone carboxylic acid. 4-hydroxyproline occurs at positions 27, 29, and 31. 3 O-linked (Ara...) hydroxyproline glycosylation sites follow: proline 27, proline 29, and proline 31. Serine 35 carries the GPI-anchor amidated serine lipid modification. The propeptide at 36-61 (SAISASFVSAGVAAVAALVFGSALRI) is removed in mature form.

The protein belongs to the AG-peptide AGP family. Post-translationally, contains 4-hydroxyproline; hydroxylated on Pro-27, Pro-29 and Pro-31. O-glycosylated on hydroxyprolines; noncontiguous hydroxylproline residues are glycosylated with arabinogalactan. In terms of tissue distribution, expressed in reproductive tissues. Expressed in chalaza, funiculus, stigma, septum, style, integument and transmitting tract.

The protein resides in the cell membrane. Its function is as follows. Proteoglycan that seems to be implicated in diverse developmental roles such as differentiation, cell-cell recognition, embryogenesis and programmed cell death. This chain is Arabinogalactan protein 15, found in Arabidopsis thaliana (Mouse-ear cress).